Consider the following 101-residue polypeptide: Large ribosomal subunit protein eL30 (101 aa).

Belongs to the eukaryotic ribosomal protein eL30 family.

The polypeptide is Large ribosomal subunit protein eL30 (Pyrobaculum calidifontis (strain DSM 21063 / JCM 11548 / VA1)).